A 676-amino-acid chain; its full sequence is Protein kinase C delta type (676 aa).

The 106-residue stretch at methionine 1 to leucine 106 folds into the C2 domain. Threonine 43 and threonine 50 each carry phosphothreonine. Tyrosine 64 is modified (phosphotyrosine). Serine 130 is subject to Phosphoserine. Threonine 141 bears the Phosphothreonine mark. A Phosphotyrosine modification is found at tyrosine 155. A Phorbol-ester/DAG-type 1 zinc finger spans residues asparagine 158–cysteine 208. Threonine 218 carries the post-translational modification Phosphothreonine. Residues proline 230–cysteine 280 form a Phorbol-ester/DAG-type 2 zinc finger. 3 positions are modified to phosphoserine; by autocatalysis: serine 299, serine 302, and serine 304. At serine 307 the chain carries Phosphoserine. Residue tyrosine 313 is modified to Phosphotyrosine. The residue at position 334 (tyrosine 334) is a Phosphotyrosine; by SRC. Residues phenylalanine 349 to phenylalanine 603 enclose the Protein kinase domain. Residue leucine 355–valine 363 coordinates ATP. Residue tyrosine 374 is modified to Phosphotyrosine. An ATP-binding site is contributed by lysine 378. Position 451 is a phosphothreonine (threonine 451). The active-site Proton acceptor is aspartate 473. 2 positions are modified to phosphoserine: serine 503 and serine 506. A Phosphothreonine; by autocatalysis modification is found at threonine 507. The residue at position 567 (tyrosine 567) is a Phosphotyrosine. The 72-residue stretch at lysine 604 to glutamate 675 folds into the AGC-kinase C-terminal domain. Phosphoserine is present on residues serine 645, serine 654, serine 658, and serine 664.

Belongs to the protein kinase superfamily. AGC Ser/Thr protein kinase family. PKC subfamily. In terms of assembly, interacts with PDPK1 (via N-terminal region). Interacts with RAD9A. Interacts with CDCP1. Interacts with MUC1. Interacts with VASP. Interacts with CAVIN3. Interacts with PRKD2 (via N-terminus and zing-finger domain 1 and 2) in response to oxidative stress; the interaction is independent of PRKD2 tyrosine phosphorylation. Interacts with PLSC3; interaction is enhanced by UV irradiation. Interacts with PRKCH upstream open reading frame 2; the interaction leads to inhibition of kinase activity. Post-translationally, autophosphorylated and/or phosphorylated at Thr-507, within the activation loop; phosphorylation at Thr-507 is not a prerequisite for enzymatic activity. Autophosphorylated at Ser-299, Ser-302 and Ser-304. Upon TNFSF10/TRAIL treatment, phosphorylated at Tyr-155; phosphorylation is required for its translocation to the endoplasmic reticulum and cleavage by caspase-3. Phosphorylated at Tyr-313, Tyr-334 and Tyr-567; phosphorylation of Tyr-313 and Tyr-567 following thrombin or zymosan stimulation potentiates its kinase activity. Phosphorylated by protein kinase PDPK1; phosphorylation is inhibited by the apoptotic C-terminal cleavage product of PKN2. Phosphorylated at Tyr-313 through a SYK and SRC mechanism downstream of C-type lectin receptors activation, promoting its activation. In terms of processing, proteolytically cleaved into a catalytic subunit and a regulatory subunit by caspase-3 during apoptosis which results in kinase activation.

It is found in the cytoplasm. Its subcellular location is the perinuclear region. The protein localises to the nucleus. It localises to the cell membrane. The protein resides in the mitochondrion. It is found in the endomembrane system. The catalysed reaction is L-seryl-[protein] + ATP = O-phospho-L-seryl-[protein] + ADP + H(+). It catalyses the reaction L-threonyl-[protein] + ATP = O-phospho-L-threonyl-[protein] + ADP + H(+). It carries out the reaction L-tyrosyl-[protein] + ATP = O-phospho-L-tyrosyl-[protein] + ADP + H(+). With respect to regulation, novel PKCs (PRKCD, PRKCE, PRKCH and PRKCQ) are calcium-insensitive, but activated by diacylglycerol (DAG) and phosphatidylserine. Three specific sites; Thr-507 (activation loop of the kinase domain), Ser-645 (turn motif) and Ser-664 (hydrophobic region), need to be phosphorylated for its full activation. Activated by caspase-3 (CASP3) cleavage during apoptosis. After cleavage, the pseudosubstrate motif in the regulatory subunit is released from the substrate recognition site of the catalytic subunit, which enables PRKCD to become constitutively activated. The catalytic subunit which displays properties of a sphingosine-dependent protein kinase is activated by D-erythro-sphingosine (Sph) or N,N-dimethyl-D-erythrosphingosine (DMS) or N,N,N-trimethyl-D-erythrosphingosine (TMS), but not by ceramide or Sph-1-P and is strongly inhibited by phosphatidylserine. Inhibited by PRKCH upstream open reading frame 2. Its function is as follows. Calcium-independent, phospholipid- and diacylglycerol (DAG)-dependent serine/threonine-protein kinase that plays contrasting roles in cell death and cell survival by functioning as a pro-apoptotic protein during DNA damage-induced apoptosis, but acting as an anti-apoptotic protein during cytokine receptor-initiated cell death, is involved in tumor suppression as well as survival of several cancers, is required for oxygen radical production by NADPH oxidase and acts as positive or negative regulator in platelet functional responses. Negatively regulates B cell proliferation and also has an important function in self-antigen induced B cell tolerance induction. Upon DNA damage, activates the promoter of the death-promoting transcription factor BCLAF1/Btf to trigger BCLAF1-mediated p53/TP53 gene transcription and apoptosis. In response to oxidative stress, interact with and activate CHUK/IKKA in the nucleus, causing the phosphorylation of p53/TP53. In the case of ER stress or DNA damage-induced apoptosis, can form a complex with the tyrosine-protein kinase ABL1 which trigger apoptosis independently of p53/TP53. In cytosol can trigger apoptosis by activating MAPK11 or MAPK14, inhibiting AKT1 and decreasing the level of X-linked inhibitor of apoptosis protein (XIAP), whereas in nucleus induces apoptosis via the activation of MAPK8 or MAPK9. Upon ionizing radiation treatment, is required for the activation of the apoptosis regulators BAX and BAK, which trigger the mitochondrial cell death pathway. Can phosphorylate MCL1 and target it for degradation which is sufficient to trigger for BAX activation and apoptosis. Is required for the control of cell cycle progression both at G1/S and G2/M phases. Mediates phorbol 12-myristate 13-acetate (PMA)-induced inhibition of cell cycle progression at G1/S phase by up-regulating the CDK inhibitor CDKN1A/p21 and inhibiting the cyclin CCNA2 promoter activity. In response to UV irradiation can phosphorylate CDK1, which is important for the G2/M DNA damage checkpoint activation. Can protect glioma cells from the apoptosis induced by TNFSF10/TRAIL, probably by inducing increased phosphorylation and subsequent activation of AKT1. Is highly expressed in a number of cancer cells and promotes cell survival and resistance against chemotherapeutic drugs by inducing cyclin D1 (CCND1) and hyperphosphorylation of RB1, and via several pro-survival pathways, including NF-kappa-B, AKT1 and MAPK1/3 (ERK1/2). Involved in antifungal immunity by mediating phosphorylation and activation of CARD9 downstream of C-type lectin receptors activation, promoting interaction between CARD9 and BCL10, followed by activation of NF-kappa-B and MAP kinase p38 pathways. Can also act as tumor suppressor upon mitogenic stimulation with PMA or TPA. In N-formyl-methionyl-leucyl-phenylalanine (fMLP)-treated cells, is required for NCF1 (p47-phox) phosphorylation and activation of NADPH oxidase activity, and regulates TNF-elicited superoxide anion production in neutrophils, by direct phosphorylation and activation of NCF1 or indirectly through MAPK1/3 (ERK1/2) signaling pathways. May also play a role in the regulation of NADPH oxidase activity in eosinophil after stimulation with IL5, leukotriene B4 or PMA. In collagen-induced platelet aggregation, acts a negative regulator of filopodia formation and actin polymerization by interacting with and negatively regulating VASP phosphorylation. Downstream of PAR1, PAR4 and CD36/GP4 receptors, regulates differentially platelet dense granule secretion; acts as a positive regulator in PAR-mediated granule secretion, whereas it negatively regulates CD36/GP4-mediated granule release. Phosphorylates MUC1 in the C-terminal and regulates the interaction between MUC1 and beta-catenin. The catalytic subunit phosphorylates 14-3-3 proteins (YWHAB, YWHAZ and YWHAH) in a sphingosine-dependent fashion. Phosphorylates ELAVL1 in response to angiotensin-2 treatment. Phosphorylates mitochondrial phospholipid scramblase 3 (PLSCR3), resulting in increased cardiolipin expression on the mitochondrial outer membrane which facilitates apoptosis. Phosphorylates SMPD1 which induces SMPD1 secretion. In Homo sapiens (Human), this protein is Protein kinase C delta type.